The chain runs to 374 residues: Flagellar P-ring protein 1 (374 aa).

A signal peptide spans 1–29 (MPGVRWVRIVGVACAALSALALSVTSASA).

The protein belongs to the FlgI family. In terms of assembly, the basal body constitutes a major portion of the flagellar organelle and consists of four rings (L,P,S, and M) mounted on a central rod.

The protein resides in the periplasm. The protein localises to the bacterial flagellum basal body. Assembles around the rod to form the L-ring and probably protects the motor/basal body from shearing forces during rotation. In Bradyrhizobium diazoefficiens (strain JCM 10833 / BCRC 13528 / IAM 13628 / NBRC 14792 / USDA 110), this protein is Flagellar P-ring protein 1.